We begin with the raw amino-acid sequence, 465 residues long: Protein dml1 (465 aa).

Position 446 is a phosphoserine (S446).

Belongs to the misato family.

It is found in the mitochondrion. In terms of biological role, involved in the partitioning of the mitochondrial organelle and mitochondrial DNA (mtDNA) inheritance. The chain is Protein dml1 (dml1) from Schizosaccharomyces pombe (strain 972 / ATCC 24843) (Fission yeast).